The following is a 1498-amino-acid chain: Rap guanine nucleotide exchange factor 2 (1498 aa).

2 disordered regions span residues 40 to 59 (HVSS…SSSL) and 68 to 101 (SEAG…SDPL). Positions 83 to 94 (VDSEDDDDEEDI) are enriched in acidic residues. Residue 135–252 (AFANMTMSVR…QKVEEEGEIV (118 aa)) coordinates a nucleoside 3',5'-cyclic phosphate. Residues 267 to 380 (KGHIVIKGTS…RLLNIACAAK (114 aa)) enclose the N-terminal Ras-GEF domain. The region spanning 385–468 (LMTLTKPSRE…LSITVKTNLF (84 aa)) is the PDZ domain. Ser501 carries the phosphoserine modification. Positions 606 to 692 (PDQVLRVFKA…GRYYLKNNME (87 aa)) constitute a Ras-associating domain. A Phosphothreonine modification is found at Thr644. In terms of domain architecture, Ras-GEF spans 717–944 (STVEVATQLS…SQGSTNATVL (228 aa)). Residues Ser806, Ser930, Ser933, Ser1022, Ser1079, Ser1088, Ser1094, Ser1115, Ser1119, Ser1158, and Ser1175 each carry the phosphoserine modification. Residues 1002–1048 (PATNTLPKNPGDKKPVKSETSPVAPRAGSQQKAQAQPPPPQPQPQHK) are disordered. The segment at 1094-1159 (SLERHKKQAE…RSSIVSNSSF (66 aa)) is disordered. Composition is skewed to low complexity over residues 1110–1124 (SSQL…QSSP) and 1140–1159 (SDSG…NSSF). Disordered regions lie at residues 1224 to 1257 (STEE…GSHD), 1304 to 1371 (TKYN…TKPV), and 1392 to 1498 (EGRY…VSAV). Polar residues-rich tracts occupy residues 1246–1257 (GSWTSCSSGSHD) and 1306–1330 (YNRQ…SSTG). Over residues 1354–1365 (EAESSSVTSVTT) the composition is skewed to low complexity. Residues 1487-1498 (TEEDEDEQVSAV) are compositionally biased toward acidic residues.

Belongs to the RAPGEF2 family. As to quaternary structure, found in a complex, at least composed of KIDINS220, MAGI2, NTRK1 and RAPGEF2; the complex is mainly formed at late endosomes in a neuronal growth factor (NGF)-dependent manner. Interacts (via C-terminal domain) with NEDD4 (via WW domains); this interaction leads to ubiquitination and degradation via the proteasome pathway in a cAMP-independent manner. Interacts with MAGI1 (via PDZ domain). Interacts with ADRB1 (via C-terminal PDZ motif); the interaction is direct. Interacts (via Ras-associating domain) with RAP1A (via GTP-bound active form). Interacts weakly with HRAS (via GDP- and GTP-bound forms). Interacts (via C-terminal domain) with MAGI2 (via PDZ and WW domains). Interacts with CDH1, CTNNB1 and TJP1. Post-translationally, ubiquitinated by NEDD4, leading to proteasomal degradation. In terms of processing, phosphorylation by PLK2 promotes its activity.

The protein localises to the cell junction. It is found in the cytoplasm. Its subcellular location is the perinuclear region. It localises to the cell membrane. The protein resides in the late endosome. Its function is as follows. Functions as a guanine nucleotide exchange factor (GEF), which activates Rap and Ras family of small GTPases by exchanging bound GDP for free GTP in a cAMP-dependent manner. Serves as a link between cell surface receptors and Rap/Ras GTPases in intracellular signaling cascades. Also acts as an effector for Rap1 by direct association with Rap1-GTP thereby leading to the amplification of Rap1-mediated signaling. Shows weak activity on HRAS. It is controversial whether RAPGEF2 binds cAMP and cGMP or not. Its binding to ligand-activated beta-1 adrenergic receptor ADRB1 leads to the Ras activation through the G(s)-alpha signaling pathway. Involved in the cAMP-induced Ras and Erk1/2 signaling pathway that leads to sustained inhibition of long term melanogenesis by reducing dendrite extension and melanin synthesis. Also provides inhibitory signals for cell proliferation of melanoma cells and promotes their apoptosis in a cAMP-independent nanner. Regulates cAMP-induced neuritogenesis by mediating the Rap1/B-Raf/ERK signaling through a pathway that is independent on both PKA and RAPGEF3/RAPGEF4. Involved in neuron migration and in the formation of the major forebrain fiber connections forming the corpus callosum, the anterior commissure and the hippocampal commissure during brain development. Involved in neuronal growth factor (NGF)-induced sustained activation of Rap1 at late endosomes and in brain-derived neurotrophic factor (BDNF)-induced axon outgrowth of hippocampal neurons. Plays a role in the regulation of embryonic blood vessel formation and in the establishment of basal junction integrity and endothelial barrier function. May be involved in the regulation of the vascular endothelial growth factor receptor KDR and cadherin CDH5 expression at allantois endothelial cell-cell junctions. The polypeptide is Rap guanine nucleotide exchange factor 2 (RAPGEF2) (Canis lupus familiaris (Dog)).